A 344-amino-acid polypeptide reads, in one-letter code: Uroporphyrinogen decarboxylase (344 aa).

Substrate-binding positions include 26-30 (RQAGR), aspartate 75, tyrosine 150, serine 205, and histidine 323.

This sequence belongs to the uroporphyrinogen decarboxylase family. In terms of assembly, homodimer.

It is found in the cytoplasm. It carries out the reaction uroporphyrinogen III + 4 H(+) = coproporphyrinogen III + 4 CO2. It participates in porphyrin-containing compound metabolism; protoporphyrin-IX biosynthesis; coproporphyrinogen-III from 5-aminolevulinate: step 4/4. Its function is as follows. Catalyzes the decarboxylation of four acetate groups of uroporphyrinogen-III to yield coproporphyrinogen-III. This Corynebacterium diphtheriae (strain ATCC 700971 / NCTC 13129 / Biotype gravis) protein is Uroporphyrinogen decarboxylase.